The following is a 1121-amino-acid chain: Cilia- and flagella-associated protein 70 (1121 aa).

The segment covering 410–428 (NLKEDKPVKEKDIDGRPRP) has biased composition (basic and acidic residues). The disordered stretch occupies residues 410-457 (NLKEDKPVKEKDIDGRPRPGDVQAPSIKSQSSDTPLEGEPPLSHNPEG). TPR repeat units follow at residues 635 to 668 (SEQL…EPQN), 669 to 702 (LDHW…NQSH), and 704 to 736 (HSLL…EPTN). Disordered regions lie at residues 778 to 802 (KQKS…PWGI) and 836 to 858 (QSDS…QKPS). TPR repeat units lie at residues 929–962 (CEYY…DYLN), 963–996 (PNVW…VVDA), 1000–1033 (HFIF…SPSC), 1035–1066 (TWLG…NNYN), and 1068–1100 (EVWA…KLKD).

The protein belongs to the CFAP70 family. In terms of tissue distribution, expressed in testis.

The protein resides in the cell projection. Its subcellular location is the cilium. The protein localises to the flagellum. It localises to the cytoplasm. It is found in the cytoskeleton. The protein resides in the flagellum basal body. Its subcellular location is the cilium axoneme. Axoneme-binding protein that plays a role in the regulation of ciliary motility and cilium length. This chain is Cilia- and flagella-associated protein 70, found in Homo sapiens (Human).